We begin with the raw amino-acid sequence, 358 residues long: Photosystem II protein D1 (358 aa).

Transmembrane regions (helical) follow at residues 28–45 (YVGW…AAAI), 117–132 (HFLI…QWEL), and 141–155 (WICV…AAFA). Chlorophyll a is bound at residue His117. Pheophytin a is bound at residue Trp125. Asp169 and Glu188 together coordinate [CaMn4O5] cluster. A helical membrane pass occupies residues 196-217 (FHMIGVAGMFGGSLFSAMHGSL). Residue His197 coordinates chlorophyll a. Residues His214 and 263 to 264 (SF) contribute to the a quinone site. Fe cation is bound at residue His214. Position 271 (His271) interacts with Fe cation. The helical transmembrane segment at 273–287 (FLAAWPVICIWITSL) threads the bilayer. [CaMn4O5] cluster contacts are provided by His331, Glu332, Asp341, and Ala343. A propeptide spanning residues 344-358 (AAESTPVALIAPAIG) is cleaved from the precursor.

The protein belongs to the reaction center PufL/M/PsbA/D family. As to quaternary structure, PSII is composed of 1 copy each of membrane proteins PsbA, PsbB, PsbC, PsbD, PsbE, PsbF, PsbH, PsbI, PsbJ, PsbK, PsbL, PsbM, PsbT, PsbX, PsbY, Psb30/Ycf12, peripheral proteins PsbO, CyanoQ (PsbQ), PsbU, PsbV and a large number of cofactors. It forms dimeric complexes. The D1/D2 heterodimer binds P680, chlorophylls that are the primary electron donor of PSII, and subsequent electron acceptors. It shares a non-heme iron and each subunit binds pheophytin, quinone, additional chlorophylls, carotenoids and lipids. D1 provides most of the ligands for the Mn4-Ca-O5 cluster of the oxygen-evolving complex (OEC). There is also a Cl(-1) ion associated with D1 and D2, which is required for oxygen evolution. The PSII complex binds additional chlorophylls, carotenoids and specific lipids. is required as a cofactor. In terms of processing, tyr-160 forms a radical intermediate that is referred to as redox-active TyrZ, YZ or Y-Z. Post-translationally, C-terminally processed by CtpA; processing is essential to allow assembly of the oxygen-evolving complex and thus photosynthetic growth.

It is found in the cellular thylakoid membrane. The enzyme catalyses 2 a plastoquinone + 4 hnu + 2 H2O = 2 a plastoquinol + O2. In terms of biological role, photosystem II (PSII) is a light-driven water:plastoquinone oxidoreductase that uses light energy to abstract electrons from H(2)O, generating O(2) and a proton gradient subsequently used for ATP formation. It consists of a core antenna complex that captures photons, and an electron transfer chain that converts photonic excitation into a charge separation. The D1/D2 (PsbA/PsbD) reaction center heterodimer binds P680, the primary electron donor of PSII as well as several subsequent electron acceptors. The sequence is that of Photosystem II protein D1 from Prochlorococcus marinus (strain MIT 9303).